A 210-amino-acid chain; its full sequence is Imidazole glycerol phosphate synthase subunit HisH (210 aa).

Residues 3 to 208 (PIAIIDYGMG…GELVRHAGNA (206 aa)) form the Glutamine amidotransferase type-1 domain. Cys-81 serves as the catalytic Nucleophile. Active-site residues include His-183 and Glu-185.

Heterodimer of HisH and HisF.

The protein localises to the cytoplasm. It catalyses the reaction 5-[(5-phospho-1-deoxy-D-ribulos-1-ylimino)methylamino]-1-(5-phospho-beta-D-ribosyl)imidazole-4-carboxamide + L-glutamine = D-erythro-1-(imidazol-4-yl)glycerol 3-phosphate + 5-amino-1-(5-phospho-beta-D-ribosyl)imidazole-4-carboxamide + L-glutamate + H(+). The catalysed reaction is L-glutamine + H2O = L-glutamate + NH4(+). It participates in amino-acid biosynthesis; L-histidine biosynthesis; L-histidine from 5-phospho-alpha-D-ribose 1-diphosphate: step 5/9. In terms of biological role, IGPS catalyzes the conversion of PRFAR and glutamine to IGP, AICAR and glutamate. The HisH subunit catalyzes the hydrolysis of glutamine to glutamate and ammonia as part of the synthesis of IGP and AICAR. The resulting ammonia molecule is channeled to the active site of HisF. This is Imidazole glycerol phosphate synthase subunit HisH from Moorella thermoacetica (strain ATCC 39073 / JCM 9320).